The chain runs to 276 residues: NH(3)-dependent NAD(+) synthetase (276 aa).

43-50 (GISGGVDS) contacts ATP. A Mg(2+)-binding site is contributed by Asp-49. Arg-146 provides a ligand contact to deamido-NAD(+). Thr-166 contributes to the ATP binding site. Position 171 (Glu-171) interacts with Mg(2+). Deamido-NAD(+) contacts are provided by Lys-179 and Asp-186. 2 residues coordinate ATP: Lys-195 and Thr-217. 266–267 (HK) lines the deamido-NAD(+) pocket.

It belongs to the NAD synthetase family. In terms of assembly, homodimer.

It catalyses the reaction deamido-NAD(+) + NH4(+) + ATP = AMP + diphosphate + NAD(+) + H(+). The protein operates within cofactor biosynthesis; NAD(+) biosynthesis; NAD(+) from deamido-NAD(+) (ammonia route): step 1/1. In terms of biological role, catalyzes the ATP-dependent amidation of deamido-NAD to form NAD. Uses ammonia as a nitrogen source. This is NH(3)-dependent NAD(+) synthetase from Aliivibrio fischeri (strain ATCC 700601 / ES114) (Vibrio fischeri).